A 194-amino-acid chain; its full sequence is Large ribosomal subunit protein uL6x (194 aa).

Residue T75 is modified to Phosphothreonine.

It belongs to the universal ribosomal protein uL6 family.

The chain is Large ribosomal subunit protein uL6x (RPL9D) from Arabidopsis thaliana (Mouse-ear cress).